Consider the following 221-residue polypeptide: Bcl-2-related ovarian killer protein homolog A (221 aa).

Positions 32 to 44 match the BH4 motif; sequence KVLCRDYIHSRLH. Residues 64 to 80 carry the BH3 motif; the sequence is VSSVLLWLGDELEYLRP. The short motif at 110–140 is the BH1 element; the sequence is EIFSTEYSRKGLEKHKGVTWGKIVSLYAVAG. A BH2 motif is present at residues 173 to 187; that stretch reads WLKKRGGWADITKCV. Residues 198-218 form a helical membrane-spanning segment; sequence WLVTAACACGHYLKAVVFYLL.

Belongs to the Bcl-2 family. As to expression, strongest expression in ovary and eye, weaker expression in gut, kidney and brain. Little expression in liver or heart.

The protein localises to the membrane. Functionally, may play a role in apoptosis. Does not appear to show pro-apoptotic activity when expressed ectopically in early embryos. The protein is Bcl-2-related ovarian killer protein homolog A of Danio rerio (Zebrafish).